We begin with the raw amino-acid sequence, 715 residues long: Methionine--tRNA ligase (715 aa).

The 'HIGH' region motif lies at 17 to 27; it reads PYANGPIHLGH. Cysteine 148, cysteine 151, cysteine 161, and cysteine 164 together coordinate Zn(2+). Residues 359-363 carry the 'KMSKS' region motif; it reads KMSKS. Lysine 362 is a binding site for ATP. The tRNA-binding domain maps to 614 to 715; sequence DLSKVELRVG…KDAKPGDRLK (102 aa).

Belongs to the class-I aminoacyl-tRNA synthetase family. MetG type 1 subfamily. Homodimer. It depends on Zn(2+) as a cofactor.

The protein localises to the cytoplasm. It carries out the reaction tRNA(Met) + L-methionine + ATP = L-methionyl-tRNA(Met) + AMP + diphosphate. In terms of biological role, is required not only for elongation of protein synthesis but also for the initiation of all mRNA translation through initiator tRNA(fMet) aminoacylation. The polypeptide is Methionine--tRNA ligase (Leptospira interrogans serogroup Icterohaemorrhagiae serovar copenhageni (strain Fiocruz L1-130)).